Consider the following 69-residue polypeptide: Cytochrome c oxidase subunit 8A, mitochondrial (69 aa).

The transit peptide at 1-25 directs the protein to the mitochondrion; that stretch reads MSSLTPLLLRSLTGPARRLMVPRAQ. The SIFI-degron signature appears at 2–19; sequence SSLTPLLLRSLTGPARRL. Residues 26–36 are Mitochondrial matrix-facing; the sequence is VHSKPPREQLG. Residues 37-60 form a helical membrane-spanning segment; it reads VLDITIGLTSCFVCCLLPAGWVLS. Residues 61–69 lie on the Mitochondrial intermembrane side of the membrane; the sequence is HLESYKKRE.

It belongs to the cytochrome c oxidase VIII family. As to quaternary structure, component of the cytochrome c oxidase (complex IV, CIV), a multisubunit enzyme composed of 14 subunits. The complex is composed of a catalytic core of 3 subunits MT-CO1, MT-CO2 and MT-CO3, encoded in the mitochondrial DNA, and 11 supernumerary subunits COX4I, COX5A, COX5B, COX6A, COX6B, COX6C, COX7A, COX7B, COX7C, COX8 and NDUFA4, which are encoded in the nuclear genome. The complex exists as a monomer or a dimer and forms supercomplexes (SCs) in the inner mitochondrial membrane with NADH-ubiquinone oxidoreductase (complex I, CI) and ubiquinol-cytochrome c oxidoreductase (cytochrome b-c1 complex, complex III, CIII), resulting in different assemblies (supercomplex SCI(1)III(2)IV(1) and megacomplex MCI(2)III(2)IV(2)). In terms of processing, in response to mitochondrial stress, the precursor protein is ubiquitinated by the SIFI complex in the cytoplasm before mitochondrial import, leading to its degradation. Within the SIFI complex, UBR4 initiates ubiquitin chain that are further elongated or branched by KCMF1.

The protein localises to the mitochondrion inner membrane. The protein operates within energy metabolism; oxidative phosphorylation. Functionally, component of the cytochrome c oxidase, the last enzyme in the mitochondrial electron transport chain which drives oxidative phosphorylation. The respiratory chain contains 3 multisubunit complexes succinate dehydrogenase (complex II, CII), ubiquinol-cytochrome c oxidoreductase (cytochrome b-c1 complex, complex III, CIII) and cytochrome c oxidase (complex IV, CIV), that cooperate to transfer electrons derived from NADH and succinate to molecular oxygen, creating an electrochemical gradient over the inner membrane that drives transmembrane transport and the ATP synthase. Cytochrome c oxidase is the component of the respiratory chain that catalyzes the reduction of oxygen to water. Electrons originating from reduced cytochrome c in the intermembrane space (IMS) are transferred via the dinuclear copper A center (CU(A)) of subunit 2 and heme A of subunit 1 to the active site in subunit 1, a binuclear center (BNC) formed by heme A3 and copper B (CU(B)). The BNC reduces molecular oxygen to 2 water molecules using 4 electrons from cytochrome c in the IMS and 4 protons from the mitochondrial matrix. The chain is Cytochrome c oxidase subunit 8A, mitochondrial (Cox8a) from Rattus norvegicus (Rat).